The following is a 156-amino-acid chain: Small ribosomal subunit protein uS7 (156 aa).

It belongs to the universal ribosomal protein uS7 family. As to quaternary structure, part of the 30S ribosomal subunit. Contacts proteins S9 and S11.

One of the primary rRNA binding proteins, it binds directly to 16S rRNA where it nucleates assembly of the head domain of the 30S subunit. Is located at the subunit interface close to the decoding center, probably blocks exit of the E-site tRNA. In Chelativorans sp. (strain BNC1), this protein is Small ribosomal subunit protein uS7.